A 162-amino-acid polypeptide reads, in one-letter code: Ribosome maturation factor RimP (162 aa).

This sequence belongs to the RimP family.

The protein resides in the cytoplasm. Its function is as follows. Required for maturation of 30S ribosomal subunits. This is Ribosome maturation factor RimP from Leptospira borgpetersenii serovar Hardjo-bovis (strain JB197).